A 177-amino-acid polypeptide reads, in one-letter code: Decaprenylphosphoryl-5-phosphoribose phosphatase (177 aa).

A run of 4 helical transmembrane segments spans residues 35–55 (HFGE…IALP), 62–82 (LVAG…KRLV), 124–144 (GLPL…LLGV), and 150–170 (VAVG…VGGG).

The protein belongs to the PA-phosphatase related phosphoesterase family.

It localises to the cell membrane. It catalyses the reaction trans,octa-cis-decaprenylphospho-beta-D-ribofuranose 5-phosphate + H2O = trans,octa-cis-decaprenylphospho-beta-D-ribofuranose + phosphate. The protein operates within cell wall biogenesis; cell wall polysaccharide biosynthesis. Functionally, phosphatase involved in the biosynthesis of decaprenylphosphoryl arabinose (DPA), which serves as the arabinose donor for the biosynthesis of arabinogalactan, the major mycobacterial cell wall polysaccharide. Catalyzes the dephosphorylation of decaprenylphosphoryl-5-phosphoribose (DPPR) to decaprenyl-phosphoribose (DPR). The polypeptide is Decaprenylphosphoryl-5-phosphoribose phosphatase (Mycobacterium tuberculosis (strain CDC 1551 / Oshkosh)).